The sequence spans 52 residues: UPF0391 membrane protein Tgr7_2500 (52 aa).

The next 2 membrane-spanning stretches (helical) occupy residues 4–24 and 29–49; these read WALI…SGVA and WIAQ…LLGG.

It belongs to the UPF0391 family.

It is found in the cell membrane. This Thioalkalivibrio sulfidiphilus (strain HL-EbGR7) protein is UPF0391 membrane protein Tgr7_2500.